Consider the following 316-residue polypeptide: Delta(1)-pyrroline-2-carboxylate reductase (316 aa).

Belongs to the ornithine cyclodeaminase/mu-crystallin family. As to quaternary structure, homodimer.

The catalysed reaction is L-proline + NAD(+) = 1-pyrroline-2-carboxylate + NADH + H(+). It carries out the reaction L-proline + NADP(+) = 1-pyrroline-2-carboxylate + NADPH + H(+). Catalyzes the reduction of Delta(1)-pyrroline-2-carboxylate (Pyr2C) to L-proline, using preferentially NADPH over NADH as the electron donor. Together with LhpH, is involved in a metabolic pathway that converts trans-3-hydroxy-L-proline (t3LHyp) to L-proline. To a much lesser extent, can also reduce Delta(1)-piperideine-2-carboxylate (Pip2C) to L-pipecolate in vitro; however, this activity has likely no physiological significance in vivo since C.psychrerythraea probably possesses no ability to metabolize D-lysine via the L-pipecolate pathway. Does not show ornithine cyclodeaminase (OCD) activity. The protein is Delta(1)-pyrroline-2-carboxylate reductase of Colwellia psychrerythraea (strain 34H / ATCC BAA-681) (Vibrio psychroerythus).